We begin with the raw amino-acid sequence, 713 residues long: Probable glutamate carboxypeptidase VP8 (713 aa).

Residues 1 to 10 are Cytoplasmic-facing; the sequence is MPHSVLARLP. Residues 11 to 31 traverse the membrane as a helical; Signal-anchor for type II membrane protein segment; that stretch reads PGSVRLVAAFGLLLLVSLLVL. At 32-713 the chain is on the extracellular side; that stretch reads HRRPGRPHVA…PTNFSSLVTP (682 aa). Asparagine 66 and asparagine 311 each carry an N-linked (GlcNAc...) asparagine glycan. The tract at residues 245–539 is catalytic; the sequence is ATSGAERLKF…EIWGLLALRL (295 aa). Zn(2+)-binding residues include histidine 345 and aspartate 355. The active-site Nucleophile is the glutamate 392. Zn(2+)-binding residues include glutamate 393, aspartate 421, and histidine 505. 2 N-linked (GlcNAc...) asparagine glycosylation sites follow: asparagine 667 and asparagine 706.

Belongs to the peptidase M28 family. M28B subfamily. Zn(2+) is required as a cofactor.

It is found in the cell membrane. It catalyses the reaction Release of an unsubstituted, C-terminal glutamyl residue, typically from Ac-Asp-Glu or folylpoly-gamma-glutamates.. In terms of biological role, involved in the regulation of meristem development and seed maturation processes. Mediates regulation of embryonic regulatory genes and genes controlling abscisic acid (ABA) biosynthesis and turnover in developing seeds. May be required for the synthesis of small signaling molecules that integrates meristem and embryo formation in seeds. The polypeptide is Probable glutamate carboxypeptidase VP8 (Zea mays (Maize)).